A 341-amino-acid polypeptide reads, in one-letter code: Very-long-chain 3-oxoacyl-CoA reductase (341 aa).

Residues 22-42 form a helical membrane-spanning segment; it reads AVTGFLLVGIASFAAPLISTI. Residues L67, D123, D131, N150, Y217, K221, V250, and T252 each coordinate NADP(+). Y217 (proton donor) is an active-site residue. Residue K221 is the Lowers pKa of active site Tyr of the active site.

The protein belongs to the short-chain dehydrogenases/reductases (SDR) family.

It localises to the endoplasmic reticulum membrane. The enzyme catalyses a very-long-chain (3R)-3-hydroxyacyl-CoA + NADP(+) = a very-long-chain 3-oxoacyl-CoA + NADPH + H(+). Its pathway is lipid metabolism; fatty acid biosynthesis. Component of the microsomal membrane bound fatty acid elongation system, which produces the 26-carbon very long-chain fatty acids (VLCFA) from palmitate. Catalyzes the reduction of the 3-ketoacyl-CoA intermediate that is formed in each cycle of fatty acid elongation. VLCFAs serve as precursors for ceramide and sphingolipids. The protein is Very-long-chain 3-oxoacyl-CoA reductase of Pyrenophora tritici-repentis (strain Pt-1C-BFP) (Wheat tan spot fungus).